The primary structure comprises 480 residues: Aspartyl/glutamyl-tRNA(Asn/Gln) amidotransferase subunit B (480 aa).

It belongs to the GatB/GatE family. GatB subfamily. As to quaternary structure, heterotrimer of A, B and C subunits.

It carries out the reaction L-glutamyl-tRNA(Gln) + L-glutamine + ATP + H2O = L-glutaminyl-tRNA(Gln) + L-glutamate + ADP + phosphate + H(+). The catalysed reaction is L-aspartyl-tRNA(Asn) + L-glutamine + ATP + H2O = L-asparaginyl-tRNA(Asn) + L-glutamate + ADP + phosphate + 2 H(+). Its function is as follows. Allows the formation of correctly charged Asn-tRNA(Asn) or Gln-tRNA(Gln) through the transamidation of misacylated Asp-tRNA(Asn) or Glu-tRNA(Gln) in organisms which lack either or both of asparaginyl-tRNA or glutaminyl-tRNA synthetases. The reaction takes place in the presence of glutamine and ATP through an activated phospho-Asp-tRNA(Asn) or phospho-Glu-tRNA(Gln). The sequence is that of Aspartyl/glutamyl-tRNA(Asn/Gln) amidotransferase subunit B from Streptococcus pneumoniae serotype 4 (strain ATCC BAA-334 / TIGR4).